Reading from the N-terminus, the 391-residue chain is Elongation factor Tu (391 aa).

Residues Lys-10 to Glu-201 form the tr-type G domain. The segment at Gly-19–Thr-26 is G1. Gly-19–Thr-26 lines the GTP pocket. Position 26 (Thr-26) interacts with Mg(2+). Residues Gly-55 to Ser-59 are G2. The tract at residues Asp-76 to Gly-79 is G3. Residues Asp-76 to His-80 and Asn-131 to Asp-134 contribute to the GTP site. Positions Asn-131–Asp-134 are G4. The interval Ser-169–Leu-171 is G5.

It belongs to the TRAFAC class translation factor GTPase superfamily. Classic translation factor GTPase family. EF-Tu/EF-1A subfamily. In terms of assembly, monomer.

The protein resides in the cytoplasm. The enzyme catalyses GTP + H2O = GDP + phosphate + H(+). Functionally, GTP hydrolase that promotes the GTP-dependent binding of aminoacyl-tRNA to the A-site of ribosomes during protein biosynthesis. This chain is Elongation factor Tu, found in Chelativorans sp. (strain BNC1).